The following is a 307-amino-acid chain: Transcription initiation factor IIF subunit beta (307 aa).

The span at 1–12 shows a compositional bias: basic and acidic residues; sequence MSEEKPTVRTEE. Disordered stretches follow at residues 1–22 and 261–307; these read MSEE…DAGD and VELR…IDVV. Over residues 13–22 the composition is skewed to acidic residues; that stretch reads DDRYEDDAGD. Positions 263–290 are enriched in polar residues; sequence LRNQQASQSESSSIDHTGKNTSPDNPGT. The segment covering 292–307 has biased composition (acidic residues); that stretch reads AEEDEDDDGVEMIDVV.

This sequence belongs to the TFIIF beta subunit family. Component of the fcp1/TFIIF/polII complex via interaction of tfg3 with both tfg1/TFIIF-alpha and tfg2/TFIIF-beta subunits.

It localises to the nucleus. In terms of biological role, TFIIF is a general transcription initiation factor that binds to RNA polymerase II and helps to recruit it to the initiation complex in collaboration with TFIIB. It promotes transcription elongation. The chain is Transcription initiation factor IIF subunit beta (tfg2) from Schizosaccharomyces pombe (strain 972 / ATCC 24843) (Fission yeast).